A 163-amino-acid chain; its full sequence is Putative 4-hydroxy-4-methyl-2-oxoglutarate aldolase (163 aa).

Residues 75–78 and Arg97 contribute to the substrate site; that span reads GDQL. An a divalent metal cation-binding site is contributed by Asp98.

This sequence belongs to the class II aldolase/RraA-like family. In terms of assembly, homotrimer. A divalent metal cation is required as a cofactor.

The catalysed reaction is 4-hydroxy-4-methyl-2-oxoglutarate = 2 pyruvate. The enzyme catalyses oxaloacetate + H(+) = pyruvate + CO2. Its function is as follows. Catalyzes the aldol cleavage of 4-hydroxy-4-methyl-2-oxoglutarate (HMG) into 2 molecules of pyruvate. Also contains a secondary oxaloacetate (OAA) decarboxylase activity due to the common pyruvate enolate transition state formed following C-C bond cleavage in the retro-aldol and decarboxylation reactions. This Photobacterium profundum (strain SS9) protein is Putative 4-hydroxy-4-methyl-2-oxoglutarate aldolase.